Consider the following 331-residue polypeptide: tRNA-cytidine(32) 2-sulfurtransferase (331 aa).

Residues 1–31 (MNAPHMNDTTADAATLDATAAPAGRPALTRR) form a disordered region. Positions 8–23 (DTTADAATLDATAAPA) are enriched in low complexity. A PP-loop motif motif is present at residues 71 to 76 (SGGKDS). [4Fe-4S] cluster-binding residues include Cys146, Cys149, and Cys237.

It belongs to the TtcA family. In terms of assembly, homodimer. Mg(2+) serves as cofactor. [4Fe-4S] cluster is required as a cofactor.

It localises to the cytoplasm. It carries out the reaction cytidine(32) in tRNA + S-sulfanyl-L-cysteinyl-[cysteine desulfurase] + AH2 + ATP = 2-thiocytidine(32) in tRNA + L-cysteinyl-[cysteine desulfurase] + A + AMP + diphosphate + H(+). The protein operates within tRNA modification. Functionally, catalyzes the ATP-dependent 2-thiolation of cytidine in position 32 of tRNA, to form 2-thiocytidine (s(2)C32). The sulfur atoms are provided by the cysteine/cysteine desulfurase (IscS) system. In Burkholderia lata (strain ATCC 17760 / DSM 23089 / LMG 22485 / NCIMB 9086 / R18194 / 383), this protein is tRNA-cytidine(32) 2-sulfurtransferase.